Here is a 341-residue protein sequence, read N- to C-terminus: Glyceraldehyde-3-phosphate dehydrogenase 2 (341 aa).

NAD(+) contacts are provided by residues 12-13 (RI), Arg-78, and Thr-120. D-glyceraldehyde 3-phosphate is bound by residues 152–154 (SCT) and Thr-183. Cys-153 functions as the Nucleophile in the catalytic mechanism. Asn-184 contacts NAD(+). D-glyceraldehyde 3-phosphate-binding positions include Arg-198, 211 to 212 (TG), and Arg-234. Asn-313 provides a ligand contact to NAD(+).

This sequence belongs to the glyceraldehyde-3-phosphate dehydrogenase family. In terms of assembly, homotetramer.

Its subcellular location is the cytoplasm. It carries out the reaction D-glyceraldehyde 3-phosphate + phosphate + NAD(+) = (2R)-3-phospho-glyceroyl phosphate + NADH + H(+). It participates in carbohydrate degradation; glycolysis; pyruvate from D-glyceraldehyde 3-phosphate: step 1/5. Catalyzes the oxidative phosphorylation of glyceraldehyde 3-phosphate (G3P) to 1,3-bisphosphoglycerate (BPG) using the cofactor NAD. The first reaction step involves the formation of a hemiacetal intermediate between G3P and a cysteine residue, and this hemiacetal intermediate is then oxidized to a thioester, with concomitant reduction of NAD to NADH. The reduced NADH is then exchanged with the second NAD, and the thioester is attacked by a nucleophilic inorganic phosphate to produce BPG. The chain is Glyceraldehyde-3-phosphate dehydrogenase 2 (gapA2) from Staphylococcus aureus (strain COL).